The sequence spans 445 residues: Cyclin-B1-2 (445 aa).

Belongs to the cyclin family. Cyclin AB subfamily. Interacts with FZR2/CCS52A1, FZR1/CCS52A2 and FZR3/CCS52B. As to expression, expressed in roots, stems and flowers.

Its function is as follows. May induce mitotic cell division. The polypeptide is Cyclin-B1-2 (CYCB1-2) (Arabidopsis thaliana (Mouse-ear cress)).